Reading from the N-terminus, the 634-residue chain is Tyrosine-protein kinase transforming protein erbB (634 aa).

The Protein kinase domain occupies 132–399 (FKKVKVLGSG…KMARDPPRYL (268 aa)). ATP-binding positions include 138–146 (LGSGAFGTV) and Lys-165. Catalysis depends on Asp-257, which acts as the Proton acceptor.

The protein belongs to the protein kinase superfamily. Tyr protein kinase family. EGF receptor subfamily.

The catalysed reaction is L-tyrosyl-[protein] + ATP = O-phospho-L-tyrosyl-[protein] + ADP + H(+). This chain is Tyrosine-protein kinase transforming protein erbB (V-ERBB), found in Avian leukosis virus (ALV).